A 655-amino-acid chain; its full sequence is p-hydroxybenzoic acid efflux pump subunit AaeB (655 aa).

10 consecutive transmembrane segments (helical) span residues 13–33 (FAVK…HFQL), 38–58 (WAVL…GGEP), 69–89 (LRII…IAMI), 93–113 (LLMI…SSLV), 121–141 (WGLA…EPLL), 152–172 (EIVI…PRSI), 370–390 (LFWL…IAVV), 407–427 (FIYG…VIIP), 431–451 (QSML…GIEV), and 482–502 (FLDS…VILL).

This sequence belongs to the aromatic acid exporter ArAE (TC 2.A.85) family.

The protein resides in the cell inner membrane. Its function is as follows. Forms an efflux pump with AaeA. Could function as a metabolic relief valve, allowing to eliminate certain compounds when they accumulate to high levels in the cell. In Shigella dysenteriae serotype 1 (strain Sd197), this protein is p-hydroxybenzoic acid efflux pump subunit AaeB.